A 379-amino-acid polypeptide reads, in one-letter code: Cobalt-precorrin-5B C(1)-methyltransferase (379 aa).

Belongs to the CbiD family.

The catalysed reaction is Co-precorrin-5B + S-adenosyl-L-methionine = Co-precorrin-6A + S-adenosyl-L-homocysteine. It functions in the pathway cofactor biosynthesis; adenosylcobalamin biosynthesis; cob(II)yrinate a,c-diamide from sirohydrochlorin (anaerobic route): step 6/10. In terms of biological role, catalyzes the methylation of C-1 in cobalt-precorrin-5B to form cobalt-precorrin-6A. The sequence is that of Cobalt-precorrin-5B C(1)-methyltransferase from Citrobacter koseri (strain ATCC BAA-895 / CDC 4225-83 / SGSC4696).